The chain runs to 454 residues: Bifunctional protein GlmU (454 aa).

Residues 1 to 228 (MTLPLHVVIL…PQDVEGANDP (228 aa)) are pyrophosphorylase. UDP-N-acetyl-alpha-D-glucosamine contacts are provided by residues 10 to 13 (LAAG), lysine 24, glutamine 76, 81 to 82 (GT), 103 to 105 (YGD), glycine 138, glutamate 153, asparagine 168, and asparagine 226. Aspartate 105 contacts Mg(2+). Mg(2+) is bound at residue asparagine 226. Residues 229 to 249 (WQLAQLERAWQLRAARALSLQ) form a linker region. Residues 250 to 454 (GVRMADPARV…IEGWERPTKK (205 aa)) form an N-acetyltransferase region. UDP-N-acetyl-alpha-D-glucosamine-binding residues include arginine 332 and lysine 350. Histidine 362 (proton acceptor) is an active-site residue. UDP-N-acetyl-alpha-D-glucosamine-binding residues include tyrosine 365 and asparagine 376. Acetyl-CoA is bound by residues alanine 379, 385–386 (NY), serine 404, alanine 422, and arginine 439.

This sequence in the N-terminal section; belongs to the N-acetylglucosamine-1-phosphate uridyltransferase family. It in the C-terminal section; belongs to the transferase hexapeptide repeat family. In terms of assembly, homotrimer. Requires Mg(2+) as cofactor.

The protein resides in the cytoplasm. The enzyme catalyses alpha-D-glucosamine 1-phosphate + acetyl-CoA = N-acetyl-alpha-D-glucosamine 1-phosphate + CoA + H(+). The catalysed reaction is N-acetyl-alpha-D-glucosamine 1-phosphate + UTP + H(+) = UDP-N-acetyl-alpha-D-glucosamine + diphosphate. Its pathway is nucleotide-sugar biosynthesis; UDP-N-acetyl-alpha-D-glucosamine biosynthesis; N-acetyl-alpha-D-glucosamine 1-phosphate from alpha-D-glucosamine 6-phosphate (route II): step 2/2. It participates in nucleotide-sugar biosynthesis; UDP-N-acetyl-alpha-D-glucosamine biosynthesis; UDP-N-acetyl-alpha-D-glucosamine from N-acetyl-alpha-D-glucosamine 1-phosphate: step 1/1. The protein operates within bacterial outer membrane biogenesis; LPS lipid A biosynthesis. Functionally, catalyzes the last two sequential reactions in the de novo biosynthetic pathway for UDP-N-acetylglucosamine (UDP-GlcNAc). The C-terminal domain catalyzes the transfer of acetyl group from acetyl coenzyme A to glucosamine-1-phosphate (GlcN-1-P) to produce N-acetylglucosamine-1-phosphate (GlcNAc-1-P), which is converted into UDP-GlcNAc by the transfer of uridine 5-monophosphate (from uridine 5-triphosphate), a reaction catalyzed by the N-terminal domain. The sequence is that of Bifunctional protein GlmU from Xanthomonas oryzae pv. oryzae (strain MAFF 311018).